The chain runs to 366 residues: tRNA-queuosine alpha-mannosyltransferase (366 aa).

The protein belongs to the glycosyltransferase group 1 family. Glycosyltransferase 4 subfamily.

The protein localises to the cytoplasm. It localises to the nucleus. The catalysed reaction is queuosine(34) in tRNA(Asp) + GDP-alpha-D-mannose = O-4''-alpha-D-mannosylqueuosine(34) in tRNA(Asp) + GDP + H(+). In terms of biological role, glycosyltransferase that specifically catalyzes mannosylation of cytoplasmic tRNA(Asp) modified with queuosine at position 34 (queuosine(34)). Mannosylates the cyclopentene moiety of queuosine(34) in tRNA(Asp) to form mannosyl-queuosine(34). Mannosylation of queuosine(34) in tRNA(Asp) is required to slow-down elongation at cognate codons, GAC and GAU, thereby regulating protein translation. This chain is tRNA-queuosine alpha-mannosyltransferase (GTDC1), found in Bos taurus (Bovine).